A 213-amino-acid polypeptide reads, in one-letter code: LexA repressor 2 (213 aa).

Positions 27–47 (QTEIARAFGFKGVRAAQYHLE) form a DNA-binding region, H-T-H motif. Catalysis depends on for autocatalytic cleavage activity residues S133 and K170.

This sequence belongs to the peptidase S24 family. Homodimer.

The catalysed reaction is Hydrolysis of Ala-|-Gly bond in repressor LexA.. Functionally, represses a number of genes involved in the response to DNA damage (SOS response), including recA and lexA. In the presence of single-stranded DNA, RecA interacts with LexA causing an autocatalytic cleavage which disrupts the DNA-binding part of LexA, leading to derepression of the SOS regulon and eventually DNA repair. This Xanthomonas oryzae pv. oryzae (strain KACC10331 / KXO85) protein is LexA repressor 2.